We begin with the raw amino-acid sequence, 190 residues long: Xanthine phosphoribosyltransferase (190 aa).

Xanthine contacts are provided by Leu-20 and Asn-27. 128 to 132 contacts 5-phospho-alpha-D-ribose 1-diphosphate; it reads ANGQA. Lys-156 lines the xanthine pocket.

It belongs to the purine/pyrimidine phosphoribosyltransferase family. Xpt subfamily. Homodimer.

The protein resides in the cytoplasm. It catalyses the reaction XMP + diphosphate = xanthine + 5-phospho-alpha-D-ribose 1-diphosphate. The protein operates within purine metabolism; XMP biosynthesis via salvage pathway; XMP from xanthine: step 1/1. Its function is as follows. Converts the preformed base xanthine, a product of nucleic acid breakdown, to xanthosine 5'-monophosphate (XMP), so it can be reused for RNA or DNA synthesis. This is Xanthine phosphoribosyltransferase from Pediococcus pentosaceus (strain ATCC 25745 / CCUG 21536 / LMG 10740 / 183-1w).